A 593-amino-acid chain; its full sequence is Uroporphyrinogen-III C-methyltransferase (593 aa).

The disordered stretch occupies residues 278–303 (ETSSSPNKKTKQETVTEGVVPPTDEN).

It belongs to the precorrin methyltransferase family.

The enzyme catalyses uroporphyrinogen III + 2 S-adenosyl-L-methionine = precorrin-2 + 2 S-adenosyl-L-homocysteine + H(+). Functionally, siroheme synthase involved in methionine biosynthesis. The polypeptide is Uroporphyrinogen-III C-methyltransferase (Saccharomyces cerevisiae (strain ATCC 204508 / S288c) (Baker's yeast)).